Reading from the N-terminus, the 215-residue chain is Protein-L-isoaspartate O-methyltransferase (215 aa).

Residue S62 is part of the active site.

This sequence belongs to the methyltransferase superfamily. L-isoaspartyl/D-aspartyl protein methyltransferase family.

The protein resides in the cytoplasm. It catalyses the reaction [protein]-L-isoaspartate + S-adenosyl-L-methionine = [protein]-L-isoaspartate alpha-methyl ester + S-adenosyl-L-homocysteine. In terms of biological role, catalyzes the methyl esterification of L-isoaspartyl residues in peptides and proteins that result from spontaneous decomposition of normal L-aspartyl and L-asparaginyl residues. It plays a role in the repair and/or degradation of damaged proteins. The chain is Protein-L-isoaspartate O-methyltransferase from Bradyrhizobium sp. (strain ORS 278).